The following is a 300-amino-acid chain: UDP-N-acetylenolpyruvoylglucosamine reductase (300 aa).

The 163-residue stretch at 28–190 (KIGGRVKYLV…TRAMMSFKKE (163 aa)) folds into the FAD-binding PCMH-type domain. Residue Arg-169 is part of the active site. The active-site Proton donor is Ser-219. Residue Glu-290 is part of the active site.

It belongs to the MurB family. FAD serves as cofactor.

Its subcellular location is the cytoplasm. The catalysed reaction is UDP-N-acetyl-alpha-D-muramate + NADP(+) = UDP-N-acetyl-3-O-(1-carboxyvinyl)-alpha-D-glucosamine + NADPH + H(+). The protein operates within cell wall biogenesis; peptidoglycan biosynthesis. Its function is as follows. Cell wall formation. This chain is UDP-N-acetylenolpyruvoylglucosamine reductase, found in Thermotoga sp. (strain RQ2).